Reading from the N-terminus, the 422-residue chain is 4-hydroxy-3-methylbut-2-en-1-yl diphosphate synthase (flavodoxin) (422 aa).

[4Fe-4S] cluster is bound by residues cysteine 316, cysteine 319, cysteine 362, and glutamate 369.

The protein belongs to the IspG family. It depends on [4Fe-4S] cluster as a cofactor.

It carries out the reaction (2E)-4-hydroxy-3-methylbut-2-enyl diphosphate + oxidized [flavodoxin] + H2O + 2 H(+) = 2-C-methyl-D-erythritol 2,4-cyclic diphosphate + reduced [flavodoxin]. The protein operates within isoprenoid biosynthesis; isopentenyl diphosphate biosynthesis via DXP pathway; isopentenyl diphosphate from 1-deoxy-D-xylulose 5-phosphate: step 5/6. Converts 2C-methyl-D-erythritol 2,4-cyclodiphosphate (ME-2,4cPP) into 1-hydroxy-2-methyl-2-(E)-butenyl 4-diphosphate. The protein is 4-hydroxy-3-methylbut-2-en-1-yl diphosphate synthase (flavodoxin) of Ehrlichia ruminantium (strain Welgevonden).